A 52-amino-acid polypeptide reads, in one-letter code: uncharacterized protein (52 aa).

This is an uncharacterized protein from Escherichia coli.